The sequence spans 129 residues: Glycine cleavage system H protein (129 aa).

A Lipoyl-binding domain is found at 24-106 (TYTVGITEHA…YGQGWIFKIK (83 aa)). An N6-lipoyllysine modification is found at lysine 65.

It belongs to the GcvH family. In terms of assembly, the glycine cleavage system is composed of four proteins: P, T, L and H. (R)-lipoate is required as a cofactor.

Functionally, the glycine cleavage system catalyzes the degradation of glycine. The H protein shuttles the methylamine group of glycine from the P protein to the T protein. The sequence is that of Glycine cleavage system H protein from Cronobacter sakazakii (strain ATCC BAA-894) (Enterobacter sakazakii).